A 91-amino-acid chain; its full sequence is Acylphosphatase (91 aa).

The 88-residue stretch at 3–90 (RVLIRVKGKV…EIYLDFSITQ (88 aa)) folds into the Acylphosphatase-like domain. Catalysis depends on residues arginine 18 and asparagine 36.

Belongs to the acylphosphatase family.

It carries out the reaction an acyl phosphate + H2O = a carboxylate + phosphate + H(+). The chain is Acylphosphatase (acyP) from Shewanella amazonensis (strain ATCC BAA-1098 / SB2B).